The primary structure comprises 112 residues: Frizzy aggregation protein FrzB (112 aa).

Necessary for proper aggregation of cells to form fruiting bodies. FRZ genes define a system of signal transduction analogous to the enterobacterial chemotaxis systems. This is Frizzy aggregation protein FrzB (frzB) from Myxococcus xanthus.